We begin with the raw amino-acid sequence, 756 residues long: Ent-kaurene synthase, chloroplastic (756 aa).

Mg(2+) is bound by residues Asp507 and Asp511. The short motif at 507 to 511 (DDFFD) is the DDXXD motif element. A helical membrane pass occupies residues 606 to 622 (YVSFALGPIVLPCLYLV). The Mg(2+) site is built by Asn651, Thr655, and Glu659.

It belongs to the terpene synthase family. Mg(2+) is required as a cofactor. As to expression, present in both leaves and flowers.

The protein localises to the plastid. The protein resides in the chloroplast membrane. It carries out the reaction ent-copalyl diphosphate = ent-kaur-16-ene + diphosphate. The protein operates within plant hormone biosynthesis; gibberellin biosynthesis. In terms of biological role, involved in the biosynthesis of labdane-type diterpenoid including marrubiin and other labdane-related furanoid diterpenoids with potential applications as anti-diabetics, analgesics or vasorelaxants. Terpene synthase that produces ent-kaurene from ent-copalyl diphosphate (ent-CPP). The polypeptide is Ent-kaurene synthase, chloroplastic (Marrubium vulgare (White horehound)).